Consider the following 152-residue polypeptide: Large ribosomal subunit protein eL14 (152 aa).

It belongs to the eukaryotic ribosomal protein eL14 family.

The chain is Large ribosomal subunit protein eL14 (RPL14) from Lumbricus rubellus (Humus earthworm).